The chain runs to 440 residues: Argininosuccinate lyase (440 aa).

This sequence belongs to the lyase 1 family. Argininosuccinate lyase subfamily.

It localises to the cytoplasm. The enzyme catalyses 2-(N(omega)-L-arginino)succinate = fumarate + L-arginine. It participates in amino-acid biosynthesis; L-arginine biosynthesis; L-arginine from L-ornithine and carbamoyl phosphate: step 3/3. The chain is Argininosuccinate lyase from Clostridium botulinum (strain Okra / Type B1).